A 362-amino-acid polypeptide reads, in one-letter code: tRNA-specific 2-thiouridylase MnmA 3 (362 aa).

ATP contacts are provided by residues 11–18 and Met37; that span reads GMSGGIDS. Residue Cys91 is the Nucleophile of the active site. A disulfide bond links Cys91 and Cys188. Gly115 contributes to the ATP binding site. Residues 137 to 139 form an interaction with tRNA region; the sequence is KDQ. The active-site Cysteine persulfide intermediate is the Cys188. The interaction with tRNA stretch occupies residues 296-297; the sequence is RY.

This sequence belongs to the MnmA/TRMU family.

It is found in the cytoplasm. The enzyme catalyses S-sulfanyl-L-cysteinyl-[protein] + uridine(34) in tRNA + AH2 + ATP = 2-thiouridine(34) in tRNA + L-cysteinyl-[protein] + A + AMP + diphosphate + H(+). Catalyzes the 2-thiolation of uridine at the wobble position (U34) of tRNA, leading to the formation of s(2)U34. This chain is tRNA-specific 2-thiouridylase MnmA 3, found in Bacteroides fragilis (strain ATCC 25285 / DSM 2151 / CCUG 4856 / JCM 11019 / LMG 10263 / NCTC 9343 / Onslow / VPI 2553 / EN-2).